The primary structure comprises 396 residues: Glideosome-associated protein 50 (396 aa).

The Lumenal segment spans residues methionine 1–arginine 369. Positions 195 and 256 each coordinate a metal cation. Residues valine 370 to phenylalanine 390 traverse the membrane as a helical segment. The Cytoplasmic portion of the chain corresponds to leucine 391–lysine 396.

The protein belongs to the metallophosphoesterase superfamily. Purple acid phosphatase family. Component of the glideosome complex composed of GAP50, GAP45, MTIP and MyoA; the complex is formed during the late schizont stage and in merozoites. MyoA, MTIP and GAP45 probably form an initial complex in the cytoplasm which is then recruited to the outer face of the inner membrane complex via the interaction with GAP50. Interacts with GAP45; the interaction is independent of GAP45 phosphorylation status and can also occur independently of the formation of the glideosome complex. Interacts with human factor H isoform CFH (via sushi 6-7 domains) and isoform FHL-1 (via sushi 6-7 domains); the interaction occurs in the vector mosquito midgut at the surface of activated gametocytes; the interaction protects the parasite from alternative complement pathway-mediated elimination. The cofactor is a metal cation. The N-terminus signal is likely to be cleaved.

The protein resides in the inner membrane complex. The protein localises to the cell membrane. Its subcellular location is the endoplasmic reticulum membrane. It catalyses the reaction a phosphate monoester + H2O = an alcohol + phosphate. With respect to regulation, activity is independent of metal ions. Component of the glideosome complex, an inner membrane complex structure involved in parasite gliding motility and host cell invasion. During the asexual blood stage, may play a role in the assembly and anchoring of the glideosome complex to the inner membrane complex. During the sexual stage in the vector mosquito midgut, protects gametocytes against host alternative complement pathway-mediated elimination by interacting with host complement inhibitor factor H. Has phosphatase activity towards nucleotides such as ATP, vitamins B1 and B6, phosphorylated sugars, glycerol phosphates and inositol triphosphates. However, the phosphatase activity is controversial. The chain is Glideosome-associated protein 50 from Plasmodium falciparum (isolate 3D7).